A 431-amino-acid polypeptide reads, in one-letter code: ORC1-type DNA replication protein 14 (431 aa).

ATP is bound by residues 62–66 (TGKSL), tyrosine 219, and arginine 231.

The protein belongs to the CDC6/cdc18 family.

Involved in regulation of DNA replication. The protein is ORC1-type DNA replication protein 14 (cdc6n) of Haloarcula marismortui (strain ATCC 43049 / DSM 3752 / JCM 8966 / VKM B-1809) (Halobacterium marismortui).